A 271-amino-acid chain; its full sequence is Probable iron transport system membrane protein HI_0359 (271 aa).

A run of 8 helical transmembrane segments spans residues 17 to 37, 55 to 75, 93 to 113, 131 to 151, 168 to 188, 194 to 214, 221 to 241, and 245 to 265; these read ALLTALIVSIICALLSCYLVL, IVLAYLAGIPLAIGAFFSGIF, TAMGIVFSGMFAIGLVMFTKI, SHQELIQSAVISAIIFCLIVF, VAGLSPKILHYGLLILLALTI, VVGVILVVAMLIAPGITALTL, MLWVAIASSIASSLIGVILSY, and ASTGACIILLQAAFFVIALAY.

Belongs to the ABC-3 integral membrane protein family.

It is found in the cell inner membrane. In terms of biological role, part of an ATP-driven transport system HI_0359/HI_0360/HI_0361/HI_0362 for iron. This chain is Probable iron transport system membrane protein HI_0359, found in Haemophilus influenzae (strain ATCC 51907 / DSM 11121 / KW20 / Rd).